A 122-amino-acid chain; its full sequence is Large ribosomal subunit protein uL14c (122 aa).

It belongs to the universal ribosomal protein uL14 family. As to quaternary structure, part of the 50S ribosomal subunit.

It is found in the plastid. Its subcellular location is the chloroplast. Binds to 23S rRNA. This is Large ribosomal subunit protein uL14c from Manihot esculenta (Cassava).